A 332-amino-acid chain; its full sequence is L-lactate dehydrogenase A chain (332 aa).

NAD(+) contacts are provided by residues 29–57 and arginine 99; that span reads GMVGMASAISVLLKDLCDELALVDVMEEK. Residues arginine 106, asparagine 138, and arginine 169 each coordinate substrate. Residue asparagine 138 coordinates NAD(+). The Proton acceptor role is filled by histidine 193. Threonine 248 provides a ligand contact to substrate.

It belongs to the LDH/MDH superfamily. LDH family. In terms of assembly, homotetramer.

It localises to the cytoplasm. It catalyses the reaction (S)-lactate + NAD(+) = pyruvate + NADH + H(+). It participates in fermentation; pyruvate fermentation to lactate; (S)-lactate from pyruvate: step 1/1. In terms of biological role, interconverts simultaneously and stereospecifically pyruvate and lactate with concomitant interconversion of NADH and NAD(+). The protein is L-lactate dehydrogenase A chain (ldha) of Lycodichthys dearborni (Antarctic eelpout).